The chain runs to 117 residues: MARMAMMILCVVLTCMVVATPYTEAAISCGQVTANLAGCLNYLRNGGAVPPACCNGVRSLNSAAKSTPDRKTACNCLKNASKSVSGIKAANAAGLPGKCGVNIPYQISPNTDCSKVQ.

A signal peptide spans Met-1–Ala-25. Intrachain disulfides connect Cys-29–Cys-76, Cys-39–Cys-53, Cys-54–Cys-99, and Cys-74–Cys-113.

Belongs to the plant LTP family.

Plant non-specific lipid-transfer proteins transfer phospholipids as well as galactolipids across membranes. May play a role in wax or cutin deposition in the cell walls of expanding epidermal cells and certain secretory tissues. This chain is Non-specific lipid-transfer protein Lac s 1, found in Lactuca sativa (Garden lettuce).